The sequence spans 242 residues: Adenosine 5'-phosphosulfate reductase (242 aa).

Residues C125, C126, C208, and C211 each contribute to the [4Fe-4S] cluster site. C234 (nucleophile; cysteine thiosulfonate intermediate) is an active-site residue.

It belongs to the PAPS reductase family. CysH subfamily. Requires [4Fe-4S] cluster as cofactor.

Its subcellular location is the cytoplasm. It catalyses the reaction [thioredoxin]-disulfide + sulfite + AMP + 2 H(+) = adenosine 5'-phosphosulfate + [thioredoxin]-dithiol. It functions in the pathway sulfur metabolism; hydrogen sulfide biosynthesis; sulfite from sulfate. Its function is as follows. Catalyzes the formation of sulfite from adenosine 5'-phosphosulfate (APS) using thioredoxin as an electron donor. This is Adenosine 5'-phosphosulfate reductase from Staphylococcus saprophyticus subsp. saprophyticus (strain ATCC 15305 / DSM 20229 / NCIMB 8711 / NCTC 7292 / S-41).